Consider the following 278-residue polypeptide: HTH-type transcriptional activator RhaS (278 aa).

Residues 174 to 272 (NQLMAWLEDH…NWSPRDIRQG (99 aa)) form the HTH araC/xylS-type domain. 2 DNA-binding regions (H-T-H motif) span residues 191–212 (EAVA…KQHT) and 239–262 (VTEI…RREF).

Binds DNA as a dimer.

It localises to the cytoplasm. Its function is as follows. Activates expression of the rhaBAD and rhaT operons. This chain is HTH-type transcriptional activator RhaS, found in Salmonella heidelberg (strain SL476).